A 66-amino-acid chain; its full sequence is Large ribosomal subunit protein bL35 (66 aa).

Over residues 1 to 16 the composition is skewed to basic residues; that stretch reads MPKQKTHRASAKRFKR. Residues 1–21 are disordered; the sequence is MPKQKTHRASAKRFKRTGSGG.

Belongs to the bacterial ribosomal protein bL35 family.

The chain is Large ribosomal subunit protein bL35 from Streptococcus agalactiae serotype Ia (strain ATCC 27591 / A909 / CDC SS700).